The following is a 621-amino-acid chain: MDFDAIVIGGGHAGIEAALAISRLNFKTLMITQNLDTIGKLSCNPAIGGLAKGNMVREIDALGGEMGRIIDFSMIQFRVLNKSRGPAVQAPRAQADKLMYQTKAKETLERQDNLDLFQDTVVDFLLNSMRNEIEGVVTERGNKFRSSVVVLTTGTFLRGKIFIGEYRANMGRLAEFSAYGLDKTLLGLGFEMGRLKTGTPARIHRKSVDFSKTEVQFGDSDIIPFSFSNGKLDKSQLSCYVTYTNKRTHEIISENMHLSPLYSGEIVGNGPRYCPSIEDKIVKFKDKDRHQIFIEPEGFNTEEMYLNGLSSSLPENVQQKLINSIEGLEHAVITRPGYAVEYDYINPIELYPSLESKRVKGLFIAGQTNGSSGYEEAAAQGLMAGINAALRLQNKKPMILTRTSSYIGVLIDDLVTKGTKEPYRMFTSRAEHRLNLRHDTSDKRLIKIGYDLGLVDEERYSKYLFKKRRVEEIKELLKQRRLSLKDIADEQLKKHVNKDFYHILKDPSISLDNLIKIDPSLSDSKVILEQVELDIKYEGYINRQKDLIKKLHNLELVKLPFDFNYGIIEGLSREAREKFSKVQPATLAQASRIPGIRNTDITVLFIYFSNPKNKVVLNFSV.

9–14 (GGGHAG) is an FAD binding site. 270–284 (GPRYCPSIEDKIVKF) serves as a coordination point for NAD(+).

It belongs to the MnmG family. In terms of assembly, homodimer. Heterotetramer of two MnmE and two MnmG subunits. Requires FAD as cofactor.

The protein resides in the cytoplasm. Its function is as follows. NAD-binding protein involved in the addition of a carboxymethylaminomethyl (cmnm) group at the wobble position (U34) of certain tRNAs, forming tRNA-cmnm(5)s(2)U34. In Borreliella afzelii (strain PKo) (Borrelia afzelii), this protein is tRNA uridine 5-carboxymethylaminomethyl modification enzyme MnmG.